Consider the following 188-residue polypeptide: ATP synthase subunit b, chloroplastic (188 aa).

Residues 35 to 57 (LINLAVVIGVLVYFGKGVLTTLL) traverse the membrane as a helical segment.

Belongs to the ATPase B chain family. As to quaternary structure, F-type ATPases have 2 components, F(1) - the catalytic core - and F(0) - the membrane proton channel. F(1) has five subunits: alpha(3), beta(3), gamma(1), delta(1), epsilon(1). F(0) has four main subunits: a(1), b(1), b'(1) and c(10-14). The alpha and beta chains form an alternating ring which encloses part of the gamma chain. F(1) is attached to F(0) by a central stalk formed by the gamma and epsilon chains, while a peripheral stalk is formed by the delta, b and b' chains.

It is found in the plastid. The protein localises to the chloroplast thylakoid membrane. Functionally, f(1)F(0) ATP synthase produces ATP from ADP in the presence of a proton or sodium gradient. F-type ATPases consist of two structural domains, F(1) containing the extramembraneous catalytic core and F(0) containing the membrane proton channel, linked together by a central stalk and a peripheral stalk. During catalysis, ATP synthesis in the catalytic domain of F(1) is coupled via a rotary mechanism of the central stalk subunits to proton translocation. Component of the F(0) channel, it forms part of the peripheral stalk, linking F(1) to F(0). This Zygnema circumcarinatum (Green alga) protein is ATP synthase subunit b, chloroplastic.